Reading from the N-terminus, the 147-residue chain is Large ribosomal subunit protein uL11 (147 aa).

The protein belongs to the universal ribosomal protein uL11 family. In terms of assembly, part of the ribosomal stalk of the 50S ribosomal subunit. Interacts with L10 and the large rRNA to form the base of the stalk. L10 forms an elongated spine to which L12 dimers bind in a sequential fashion forming a multimeric L10(L12)X complex. In terms of processing, one or more lysine residues are methylated.

In terms of biological role, forms part of the ribosomal stalk which helps the ribosome interact with GTP-bound translation factors. The chain is Large ribosomal subunit protein uL11 from Parabacteroides distasonis (strain ATCC 8503 / DSM 20701 / CIP 104284 / JCM 5825 / NCTC 11152).